The primary structure comprises 787 residues: Integrin beta-6 (787 aa).

The first 21 residues, 1-21 (MGIELVCLFLLLLGRNDHVQG), serve as a signal peptide directing secretion. In terms of domain architecture, PSI spans 22-71 (GCAWSGAETCSDCLLTGPHCAWCSQENFTHLSGAGERCDTPENLLAKGCQ). Residues 22-708 (GCAWSGAETC…KDCPKPPNIP (687 aa)) lie on the Extracellular side of the membrane. 19 cysteine pairs are disulfide-bonded: Cys-23–Cys-41, Cys-31–Cys-454, Cys-34–Cys-59, Cys-44–Cys-70, Cys-197–Cys-204, Cys-252–Cys-293, Cys-394–Cys-406, Cys-426–Cys-452, Cys-456–Cys-476, Cys-467–Cys-479, Cys-481–Cys-490, Cys-492–Cys-519, Cys-502–Cys-517, Cys-511–Cys-522, Cys-524–Cys-537, Cys-539–Cys-560, Cys-544–Cys-558, Cys-552–Cys-563, and Cys-565–Cys-574. Residues Asn-48 and Asn-97 are each glycosylated (N-linked (GlcNAc...) asparagine). The VWFA domain maps to 131 to 371 (YPVDLYYLMD…QLIISAYEEL (241 aa)). Residues Asp-140, Ser-142, and Ser-144 each contribute to the Mg(2+) site. Residues Ser-144, Asp-147, Asp-148, and Glu-179 each coordinate Ca(2+). Positions 235, 237, 239, and 240 each coordinate Ca(2+). Glu-240 contacts Mg(2+). N-linked (GlcNAc...) asparagine glycosylation occurs at Asn-260. The Ca(2+) site is built by Asp-271 and Lys-355. A glycan (N-linked (GlcNAc...) asparagine) is linked at Asn-387. Asn-418 carries N-linked (GlcNAc...) asparagine glycosylation. 4 I-EGF domains span residues 456–491 (CQREVEANSSKCHHGNGSFQCGVCACNPGHMGPRCE), 492–538 (CGED…PYCQ), 539–575 (CDNFSCLRHKGLLCGDNGDCDCGECVCRDGWTGEYCN), and 576–615 (CTTSRDACASEDGVLCSGRGDCVCGKCVCRNPGASGPTCE). Asn-463 and Asn-471 each carry an N-linked (GlcNAc...) asparagine glycan. The N-linked (GlcNAc...) asparagine glycan is linked to Asn-541. Asn-575 carries N-linked (GlcNAc...) asparagine glycosylation. Intrachain disulfides connect Cys-576–Cys-599, Cys-583–Cys-597, Cys-591–Cys-602, Cys-604–Cys-614, Cys-617–Cys-620, Cys-624–Cys-669, Cys-630–Cys-649, Cys-633–Cys-645, and Cys-677–Cys-701. Asn-695 carries N-linked (GlcNAc...) asparagine glycosylation. Residues 709–729 (MIMLGVSLAILLIGVVLLCIW) traverse the membrane as a helical segment. The interval 730-757 (KLLVSFHDRKEVAKFEAERSKAKWQTGT) is interaction with HAX1. Residues 730–787 (KLLVSFHDRKEVAKFEAERSKAKWQTGTNPLYRGSTSTFKNVTYKHREKHKVGLSSDG) are Cytoplasmic-facing.

Belongs to the integrin beta chain family. In terms of assembly, heterodimer of an alpha and a beta subunit. Interacts with FLNB. Interacts with HAX1. ITGAV:ITGB6 interacts with FBN1. ITGAV:ITGB6 interacts with TGFB1.

The protein localises to the cell membrane. It is found in the cell junction. The protein resides in the focal adhesion. Integrin alpha-V:beta-6 (ITGAV:ITGB6) is a receptor for fibronectin and cytotactin. It recognizes the sequence R-G-D in its ligands. ITGAV:ITGB6 acts as a receptor for fibrillin-1 (FBN1) and mediates R-G-D-dependent cell adhesion to FBN1. Integrin alpha-V:beta-6 (ITGAV:ITGB6) mediates R-G-D-dependent release of transforming growth factor beta-1 (TGF-beta-1) from regulatory Latency-associated peptide (LAP), thereby playing a key role in TGF-beta-1 activation. The protein is Integrin beta-6 (Itgb6) of Rattus norvegicus (Rat).